Reading from the N-terminus, the 196-residue chain is Large ribosomal subunit protein uL14my (196 aa).

Residues 1-62 (MATALASKLS…TILKCVDNSC (62 aa)) constitute a mitochondrion transit peptide. Residues 148-175 (EKKGQNNSHGSKRKMEYNQPTGTRVFGP) are disordered.

Belongs to the universal ribosomal protein uL14 family. Part of the mitochondrial 50S ribosomal subunit. In terms of tissue distribution, mostly expressed in pistils and inflorescences, including floral organs and meristems, and, to a lower extent, in leaves.

It is found in the mitochondrion. Functionally, binds to 23S rRNA in mitochondrion. Required for the formation of the proximal region of the ovule primordium during floral organogenesis, thus participating in patterning and growth of ovule. Also regulates the initiation and/or maintenance of integument and embryo sac ontogenesis. Prevents inappropriate cell death in the young ovule. This chain is Large ribosomal subunit protein uL14my (HLL), found in Arabidopsis thaliana (Mouse-ear cress).